The primary structure comprises 474 residues: 15-cis-phytoene desaturase (474 aa).

It belongs to the carotenoid/retinoid oxidoreductase family.

It is found in the cell membrane. It carries out the reaction 2 a plastoquinone + 15-cis-phytoene = 9,9',15-tri-cis-zeta-carotene + 2 a plastoquinol. It functions in the pathway carotenoid biosynthesis; lycopene biosynthesis. With respect to regulation, inhibited by the herbicide norflurazon in a non-competitive way. In terms of biological role, this enzyme converts phytoene into zeta-carotene via the intermediary of phytofluene by the symmetrical introduction of two double bonds at the C-11 and C-11' positions of phytoene. Also active with phytofluene and 1,2-epoxyphytoene as substrates. The chain is 15-cis-phytoene desaturase (pds) from Synechococcus elongatus (strain ATCC 33912 / PCC 7942 / FACHB-805) (Anacystis nidulans R2).